Reading from the N-terminus, the 31-residue chain is 23S rRNA methylase leader peptide (31 aa).

Functionally, this peptide is involved in the control mechanism of the synthesis of the erythromycin resistance protein. The polypeptide is 23S rRNA methylase leader peptide (ermC) (Escherichia coli).